Reading from the N-terminus, the 182-residue chain is ATP synthase subunit delta (182 aa).

It belongs to the ATPase delta chain family. F-type ATPases have 2 components, F(1) - the catalytic core - and F(0) - the membrane proton channel. F(1) has five subunits: alpha(3), beta(3), gamma(1), delta(1), epsilon(1). F(0) has three main subunits: a(1), b(2) and c(10-14). The alpha and beta chains form an alternating ring which encloses part of the gamma chain. F(1) is attached to F(0) by a central stalk formed by the gamma and epsilon chains, while a peripheral stalk is formed by the delta and b chains.

It localises to the cell membrane. Functionally, f(1)F(0) ATP synthase produces ATP from ADP in the presence of a proton or sodium gradient. F-type ATPases consist of two structural domains, F(1) containing the extramembraneous catalytic core and F(0) containing the membrane proton channel, linked together by a central stalk and a peripheral stalk. During catalysis, ATP synthesis in the catalytic domain of F(1) is coupled via a rotary mechanism of the central stalk subunits to proton translocation. This protein is part of the stalk that links CF(0) to CF(1). It either transmits conformational changes from CF(0) to CF(1) or is implicated in proton conduction. The polypeptide is ATP synthase subunit delta (Syntrophomonas wolfei subsp. wolfei (strain DSM 2245B / Goettingen)).